Reading from the N-terminus, the 494-residue chain is V-type proton ATPase subunit B (494 aa).

Arg-384 serves as a coordination point for ATP.

It belongs to the ATPase alpha/beta chains family. In terms of assembly, V-ATPase is a heteromultimeric enzyme made up of two complexes: the ATP-hydrolytic V1 complex and the proton translocation V0 complex. The V1 complex consists of three catalytic AB heterodimers that form a heterohexamer, three peripheral stalks each consisting of EG heterodimers, one central rotor including subunits D and F, and the regulatory subunits C and H. The proton translocation complex V0 consists of the proton transport subunit a, a ring of proteolipid subunits c9c'', rotary subunit d, subunits e and f, and the accessory subunits VhaAC45 and ATP6AP2.

Non-catalytic subunit of the V1 complex of vacuolar(H+)-ATPase (V-ATPase), a multisubunit enzyme composed of a peripheral complex (V1) that hydrolyzes ATP and a membrane integral complex (V0) that translocates protons. V-ATPase is responsible for acidifying and maintaining the pH of intracellular compartments and in some cell types, is targeted to the plasma membrane, where it is responsible for acidifying the extracellular environment. Essential for the proper assembly and activity of V-ATPase. The polypeptide is V-type proton ATPase subunit B (VHA55) (Heliothis virescens (Tobacco budworm moth)).